The primary structure comprises 914 residues: Penicillin-binding protein 1A/1B (914 aa).

Residues 1–29 form a disordered region; sequence MSDQFNSREARRKANSKSSPSPKKGKKRK. Topologically, residues 1–37 are cytoplasmic; that stretch reads MSDQFNSREARRKANSKSSPSPKKGKKRKKGGLFKKT. A helical; Signal-anchor for type II membrane protein membrane pass occupies residues 38–58; the sequence is LFTLLILFVLGVVGGAVTFAV. Residues 59–914 lie on the Extracellular side of the membrane; the sequence is MVSDAPSLDE…TNSSSIEKTN (856 aa). Positions 77 to 246 are transglycosylase; it reads STIYDKNGKE…TAYNPVKNPD (170 aa). Glu-115 serves as the catalytic Proton donor; for transglycosylase activity. Positions 329-662 are transpeptidase; the sequence is TKAQDKLDEL…PDSVVEATVE (334 aa). Ser-390 (acyl-ester intermediate; for transpeptidase activity) is an active-site residue. In terms of domain architecture, Fibronectin type-III spans 708–795; it reads KLSGLNVKYD…SYEVPKAEDD (88 aa). The disordered stretch occupies residues 773–914; the sequence is TAVSDDGKST…TNSSSIEKTN (142 aa). Positions 798 to 828 are enriched in basic and acidic residues; the sequence is KKDQQQTDDEKQDDEKTQDDTQTDDSQKDDG. Residues 829 to 840 are compositionally biased toward acidic residues; the sequence is QTDQDQTDDSTN. Low complexity-rich tracts occupy residues 848 to 892 and 900 to 914; these read NTNT…GSDT and SNKTQTNSSSIEKTN.

The protein in the N-terminal section; belongs to the glycosyltransferase 51 family. In the C-terminal section; belongs to the transpeptidase family. The product expressed from the translation of the ponA gene appears as two bands on a gel (1A and 1B), but the specific amino acid sequence of each protein is unknown. Post-translationally, the N-terminus is blocked.

Its subcellular location is the cell membrane. It localises to the forespore inner membrane. It catalyses the reaction [GlcNAc-(1-&gt;4)-Mur2Ac(oyl-L-Ala-gamma-D-Glu-L-Lys-D-Ala-D-Ala)](n)-di-trans,octa-cis-undecaprenyl diphosphate + beta-D-GlcNAc-(1-&gt;4)-Mur2Ac(oyl-L-Ala-gamma-D-Glu-L-Lys-D-Ala-D-Ala)-di-trans,octa-cis-undecaprenyl diphosphate = [GlcNAc-(1-&gt;4)-Mur2Ac(oyl-L-Ala-gamma-D-Glu-L-Lys-D-Ala-D-Ala)](n+1)-di-trans,octa-cis-undecaprenyl diphosphate + di-trans,octa-cis-undecaprenyl diphosphate + H(+). The catalysed reaction is Preferential cleavage: (Ac)2-L-Lys-D-Ala-|-D-Ala. Also transpeptidation of peptidyl-alanyl moieties that are N-acyl substituents of D-alanine.. It participates in cell wall biogenesis; peptidoglycan biosynthesis. In terms of biological role, cell wall formation. Synthesis of cross-linked peptidoglycan from the lipid intermediates. The enzyme has a penicillin-insensitive transglycosylase N-terminal domain (formation of linear glycan strands) and a penicillin-sensitive transpeptidase C-terminal domain (cross-linking of the peptide subunits). Required for vegetative growth. Has a partially redundant function with PBP-2A (pbpA) during spore outgrowth. The sequence is that of Penicillin-binding protein 1A/1B (ponA) from Bacillus subtilis (strain 168).